We begin with the raw amino-acid sequence, 459 residues long: Periodic tryptophan protein 1 homolog (459 aa).

A disordered region spans residues 44 to 84 (GDTQQELDEESDDDAEEGENAEEDQNDMDVDDHADANSENR). Over residues 48-73 (QELDEESDDDAEEGENAEEDQNDMDV) the composition is skewed to acidic residues. Positions 74–84 (DDHADANSENR) are enriched in basic and acidic residues. WD repeat units follow at residues 168 to 214 (LLPS…AIEP), 232 to 272 (GHKD…PHTT), 275 to 315 (AFGK…GVNS), 321 to 361 (KVDG…QLLW), and 365 to 405 (AHNE…AKHV). Ser385 carries the phosphoserine modification.

The protein belongs to the WD repeat PWP1 family. As to quaternary structure, interacts with Mybbp1A. In terms of processing, phosphorylated in response to nutrient-activated TORC1 signaling. As to expression, detected in the germline of adult testis and ovary (at protein level). Detected in ovary somatic cells, in zfh1-positive cyst cells in the testis and absent in differentiated cyst cells (at protein level).

Its subcellular location is the nucleus. It localises to the nucleolus. The protein localises to the chromosome. It is found in the nucleoplasm. Its function is as follows. Chromatin-associated factor that regulates transcription. Regulates Pol I-mediated rRNA biogenesis and, probably, Pol III-mediated transcription. Regulates the localization to the nucleolus of Cdk7, a regulator of the Pol I-elongation factor TFIIH. Acts as a regulator of cell proliferation and tissue growth as part of the TORC1 and Myc signaling pathway in response to nutrients. Required in males for both germline stem cell (GSC) maintenance and early stages of germ cell differentiation of germ cell cysts. Not required for female germline stem cell (GSC) maintenance, but necessary to regulate germ cell differentiation and egg chamber development. In female somatic cells, required for follicle stem cell survival and maintenance. This Drosophila melanogaster (Fruit fly) protein is Periodic tryptophan protein 1 homolog.